The following is a 258-amino-acid chain: Venom plasminogen activator GPV-PA (258 aa).

An N-terminal signal peptide occupies residues 1–18; the sequence is MVLIRVLANLLILQLSYA. The propeptide occupies 19–24; sequence QKSSEL. In terms of domain architecture, Peptidase S1 spans 25 to 249; it reads VFGGRPCNIN…YTDWIQSIIA (225 aa). 6 disulfides stabilise this stretch: Cys-31–Cys-163, Cys-50–Cys-66, Cys-98–Cys-256, Cys-142–Cys-210, Cys-174–Cys-189, and Cys-200–Cys-225. Asn-44 is a glycosylation site (N-linked (GlcNAc...) asparagine). Active-site charge relay system residues include His-65 and Asp-110. 2 N-linked (GlcNAc...) asparagine glycosylation sites follow: Asn-121 and Asn-185. The active-site Charge relay system is the Ser-204.

The protein belongs to the peptidase S1 family. Snake venom subfamily. As to quaternary structure, monomer. As to expression, expressed by the venom gland.

The protein resides in the secreted. Snake venom serine protease that activates plasminogen. The sequence is that of Venom plasminogen activator GPV-PA from Trimeresurus albolabris (White-lipped pit viper).